Consider the following 264-residue polypeptide: S-adenosylmethionine decarboxylase proenzyme (264 aa).

Ser-112 functions as the Schiff-base intermediate with substrate; via pyruvic acid in the catalytic mechanism. A Pyruvic acid (Ser); by autocatalysis modification is found at Ser-112. The active-site Proton acceptor; for processing activity is the His-117. Catalysis depends on Cys-140, which acts as the Proton donor; for catalytic activity.

It belongs to the prokaryotic AdoMetDC family. Type 2 subfamily. As to quaternary structure, heterooctamer of four alpha and four beta chains arranged as a tetramer of alpha/beta heterodimers. It depends on pyruvate as a cofactor. Is synthesized initially as an inactive proenzyme. Formation of the active enzyme involves a self-maturation process in which the active site pyruvoyl group is generated from an internal serine residue via an autocatalytic post-translational modification. Two non-identical subunits are generated from the proenzyme in this reaction, and the pyruvate is formed at the N-terminus of the alpha chain, which is derived from the carboxyl end of the proenzyme. The post-translation cleavage follows an unusual pathway, termed non-hydrolytic serinolysis, in which the side chain hydroxyl group of the serine supplies its oxygen atom to form the C-terminus of the beta chain, while the remainder of the serine residue undergoes an oxidative deamination to produce ammonia and the pyruvoyl group blocking the N-terminus of the alpha chain.

It carries out the reaction S-adenosyl-L-methionine + H(+) = S-adenosyl 3-(methylsulfanyl)propylamine + CO2. The protein operates within amine and polyamine biosynthesis; S-adenosylmethioninamine biosynthesis; S-adenosylmethioninamine from S-adenosyl-L-methionine: step 1/1. In terms of biological role, catalyzes the decarboxylation of S-adenosylmethionine to S-adenosylmethioninamine (dcAdoMet), the propylamine donor required for the synthesis of the polyamines spermine and spermidine from the diamine putrescine. This Yersinia pseudotuberculosis serotype I (strain IP32953) protein is S-adenosylmethionine decarboxylase proenzyme.